Here is a 299-residue protein sequence, read N- to C-terminus: Protoheme IX farnesyltransferase (299 aa).

The next 9 membrane-spanning stretches (helical) occupy residues 29–49, 51–71, 100–120, 123–143, 150–170, 177–197, 223–243, 244–264, and 275–295; these read VVTL…PGAV, LQPL…AAAM, HAAT…YWLV, LTAW…TAYL, NIVI…TAVT, GLLL…ALAI, CIFL…LVGM, SGAL…YKAW, and AMDV…LLLV.

It belongs to the UbiA prenyltransferase family. Protoheme IX farnesyltransferase subfamily.

It is found in the cell inner membrane. The catalysed reaction is heme b + (2E,6E)-farnesyl diphosphate + H2O = Fe(II)-heme o + diphosphate. The protein operates within porphyrin-containing compound metabolism; heme O biosynthesis; heme O from protoheme: step 1/1. Its function is as follows. Converts heme B (protoheme IX) to heme O by substitution of the vinyl group on carbon 2 of heme B porphyrin ring with a hydroxyethyl farnesyl side group. The chain is Protoheme IX farnesyltransferase from Shewanella amazonensis (strain ATCC BAA-1098 / SB2B).